Consider the following 254-residue polypeptide: Ankyrin repeat domain-containing protein 7 (254 aa).

ANK repeat units follow at residues 58-87 (KYRT…KINV), 91-120 (ENKS…DPDL), 124-153 (RYNT…DLEA), 157-186 (DGYT…DVNA), and 190-219 (YQRT…ELCY).

In terms of tissue distribution, testis specific.

The sequence is that of Ankyrin repeat domain-containing protein 7 (ANKRD7) from Homo sapiens (Human).